Reading from the N-terminus, the 290-residue chain is Undecaprenyl-diphosphatase (290 aa).

6 consecutive transmembrane segments (helical) span residues 39–59 (PGAA…LIYF), 85–105 (AQMG…GITL), 118–138 (LIAT…RLAA), 202–222 (SFLL…KDVG), 230–250 (PTIF…AWFM), and 261–281 (FVIY…AGVL).

It belongs to the UppP family.

Its subcellular location is the cell membrane. The catalysed reaction is di-trans,octa-cis-undecaprenyl diphosphate + H2O = di-trans,octa-cis-undecaprenyl phosphate + phosphate + H(+). Catalyzes the dephosphorylation of undecaprenyl diphosphate (UPP). Confers resistance to bacitracin. In Streptomyces griseus subsp. griseus (strain JCM 4626 / CBS 651.72 / NBRC 13350 / KCC S-0626 / ISP 5235), this protein is Undecaprenyl-diphosphatase.